Here is a 440-residue protein sequence, read N- to C-terminus: Nuclear hormone receptor family member nhr-130 (440 aa).

The segment at residues 34–110 (LYTCQVCALP…VGMDPGRFQF (77 aa)) is a DNA-binding region (nuclear receptor). 2 NR C4-type zinc fingers span residues 37–57 (CQVC…CRAC) and 74–93 (CKKQ…CKKC). An NR LBD domain is found at 184 to 439 (EKPLIARNNL…FSHPEMFEDT (256 aa)).

Belongs to the nuclear hormone receptor family.

The protein localises to the nucleus. Orphan nuclear receptor. The protein is Nuclear hormone receptor family member nhr-130 (nhr-130) of Caenorhabditis elegans.